Here is a 125-residue protein sequence, read N- to C-terminus: Histone H2A, orphon (125 aa).

Residues 1–18 show a composition bias toward basic residues; sequence MSGRGKGGKVKAKAKSRS. The disordered stretch occupies residues 1–21; sequence MSGRGKGGKVKAKAKSRSSRA. The residue at position 2 (Ser-2) is an N-acetylserine. Phosphoserine is present on Ser-2. Lys-119 participates in a covalent cross-link: Glycyl lysine isopeptide (Lys-Gly) (interchain with G-Cter in ubiquitin).

Belongs to the histone H2A family. The nucleosome is a histone octamer containing two molecules each of H2A, H2B, H3 and H4 assembled in one H3-H4 heterotetramer and two H2A-H2B heterodimers. The octamer wraps approximately 147 bp of DNA. Monoubiquitination of Lys-119 gives a specific tag for epigenetic transcriptional repression. Post-translationally, phosphorylation on Ser-2 is enhanced during mitosis. Phosphorylation on Ser-2 directly represses transcription.

It localises to the nucleus. The protein resides in the chromosome. Core component of nucleosome. Nucleosomes wrap and compact DNA into chromatin, limiting DNA accessibility to the cellular machineries which require DNA as a template. Histones thereby play a central role in transcription regulation, DNA repair, DNA replication and chromosomal stability. DNA accessibility is regulated via a complex set of post-translational modifications of histones, also called histone code, and nucleosome remodeling. This is Histone H2A, orphon from Chironomus thummi thummi (Midge).